The chain runs to 31 residues: Cycloviolacin-O23 (31 aa).

A cross-link (cyclopeptide (Gly-Asn)) is located at residues 1–31 (GLPTCGETCFGGTCNTPGCTCDSSWPICTHN). 3 disulfide bridges follow: Cys5-Cys19, Cys9-Cys21, and Cys14-Cys28.

Post-translationally, this is a cyclic peptide. Expressed in leaves but not in petals, petioles, roots and runners (at protein level).

Probably participates in a plant defense mechanism. This is Cycloviolacin-O23 from Viola odorata (Sweet violet).